The sequence spans 210 residues: Pyridoxine/pyridoxamine 5'-phosphate oxidase (210 aa).

Residues 7–10 and lysine 65 each bind substrate; that span reads REDY. FMN contacts are provided by residues 60–65, 75–76, arginine 81, lysine 82, and glutamine 104; these read RMVLLK and FT. Positions 122, 126, and 130 each coordinate substrate. Residues 139 to 140 and tryptophan 183 contribute to the FMN site; that span reads QS. 189 to 191 is a substrate binding site; it reads RLH. Arginine 193 contributes to the FMN binding site.

This sequence belongs to the pyridoxamine 5'-phosphate oxidase family. Homodimer. FMN is required as a cofactor.

It carries out the reaction pyridoxamine 5'-phosphate + O2 + H2O = pyridoxal 5'-phosphate + H2O2 + NH4(+). The catalysed reaction is pyridoxine 5'-phosphate + O2 = pyridoxal 5'-phosphate + H2O2. It functions in the pathway cofactor metabolism; pyridoxal 5'-phosphate salvage; pyridoxal 5'-phosphate from pyridoxamine 5'-phosphate: step 1/1. Its pathway is cofactor metabolism; pyridoxal 5'-phosphate salvage; pyridoxal 5'-phosphate from pyridoxine 5'-phosphate: step 1/1. Its function is as follows. Catalyzes the oxidation of either pyridoxine 5'-phosphate (PNP) or pyridoxamine 5'-phosphate (PMP) into pyridoxal 5'-phosphate (PLP). This Neisseria meningitidis serogroup A / serotype 4A (strain DSM 15465 / Z2491) protein is Pyridoxine/pyridoxamine 5'-phosphate oxidase.